A 648-amino-acid polypeptide reads, in one-letter code: MADNTQRQRESISLTPMAHGLENMGAEFLESMEEGRLPHSHSSLPEGEGGLNKAERKAFSRWRSLQPTVQARSFCREHRQLFGWICKGLLSTACLGFLMVACLLDLQRALALLIITCVVLVFLAYDLLKRLLGSKLRRCVKFQGHSCLSLWLKRGLALAAGVGLILWLSLDTAQRPEQLVSFAGICVFLVLLFAGSKHHRAVSWRAVSWGLGLQFVLGLFVIRTEPGFIAFQWLGDQIQVFLSYTEAGSSFVFGEALVKDVFAFQVLPIIIFFSCVMSVLYYLGLMQWVILKIAWLMQVTMGTSATETLSVAGNIFVSQTEAPLLIRPYLADMTLSEVHVVMTGGYATIAGSLLGAYISFGIDAASLIAASVMAAPCALALSKLVYPEVEESKFRSENGVKLTYGDAQNLLEAASAGAAISVKVVANIAANLIAFLAVLAFVNAALSWLGDMVDIQGLSFQLICSYVLRPVAFLMGVAWEDCPVVAELLGIKFFLNEFVAYQELSQYKQRRLAGAEEWLGDKKQWISVRAEILTTYALCGFANFSSIGIMLGGLTSLVPQRRSDFSQIVLRALITGAFVSLLNACVAGILYVPRGVEVDCVSLLNQTVSSSSFEVYLCCRQVFQSTSSEFSQVALDNCCRFYNHTVCT.

Residues 1 to 80 (MADNTQRQRE…ARSFCREHRQ (80 aa)) lie on the Cytoplasmic side of the membrane. Residues 81-104 (LFGWICKGLLSTACLGFLMVACLL) form a helical membrane-spanning segment. Residues 105-109 (DLQRA) lie on the Extracellular side of the membrane. The helical transmembrane segment at 110 to 128 (LALLIITCVVLVFLAYDLL) threads the bilayer. Topologically, residues 129-147 (KRLLGSKLRRCVKFQGHSC) are cytoplasmic. Residues 148-167 (LSLWLKRGLALAAGVGLILW) traverse the membrane as a helical segment. Topologically, residues 168 to 178 (LSLDTAQRPEQ) are extracellular. The helical transmembrane segment at 179 to 195 (LVSFAGICVFLVLLFAG) threads the bilayer. The Cytoplasmic segment spans residues 196–201 (SKHHRA). A helical membrane pass occupies residues 202 to 222 (VSWRAVSWGLGLQFVLGLFVI). The Extracellular segment spans residues 223-261 (RTEPGFIAFQWLGDQIQVFLSYTEAGSSFVFGEALVKDV). A helical transmembrane segment spans residues 262–283 (FAFQVLPIIIFFSCVMSVLYYL). The Cytoplasmic segment spans residues 284-294 (GLMQWVILKIA). The chain crosses the membrane as a helical span at residues 295-318 (WLMQVTMGTSATETLSVAGNIFVS). The Extracellular portion of the chain corresponds to 319-337 (QTEAPLLIRPYLADMTLSE). Residues 338-360 (VHVVMTGGYATIAGSLLGAYISF) form a helical membrane-spanning segment. Residues 361–366 (GIDAAS) are Cytoplasmic-facing. Residues 367–386 (LIAASVMAAPCALALSKLVY) traverse the membrane as a helical segment. The Extracellular segment spans residues 387-423 (PEVEESKFRSENGVKLTYGDAQNLLEAASAGAAISVK). A helical transmembrane segment spans residues 424–446 (VVANIAANLIAFLAVLAFVNAAL). Residues 447–457 (SWLGDMVDIQG) lie on the Cytoplasmic side of the membrane. A helical membrane pass occupies residues 458–479 (LSFQLICSYVLRPVAFLMGVAW). Over 480-534 (EDCPVVAELLGIKFFLNEFVAYQELSQYKQRRLAGAEEWLGDKKQWISVRAEILT) the chain is Extracellular. A helical transmembrane segment spans residues 535–558 (TYALCGFANFSSIGIMLGGLTSLV). The Cytoplasmic segment spans residues 559–569 (PQRRSDFSQIV). Residues 570 to 592 (LRALITGAFVSLLNACVAGILYV) traverse the membrane as a helical segment. The Extracellular portion of the chain corresponds to 593-648 (PRGVEVDCVSLLNQTVSSSSFEVYLCCRQVFQSTSSEFSQVALDNCCRFYNHTVCT). 2 N-linked (GlcNAc...) asparagine glycosylation sites follow: asparagine 605 and asparagine 643.

It belongs to the concentrative nucleoside transporter (CNT) (TC 2.A.41) family. N-glycosylated. N-glycosylation is required for localization to the plasma membrane and the transporter activity. In terms of tissue distribution, expressed predominantly in the brush-border membranes of the polarized epithelial cells of jejunum and renal cortical tubules and in the bile canalicular membranes of liver parenchymal cells.

It localises to the cell membrane. The protein resides in the apical cell membrane. The catalysed reaction is uridine(out) + Na(+)(out) = uridine(in) + Na(+)(in). The enzyme catalyses thymidine(out) + Na(+)(out) = thymidine(in) + Na(+)(in). It carries out the reaction cytidine(out) + Na(+)(out) = cytidine(in) + Na(+)(in). It catalyses the reaction adenosine(out) + Na(+)(out) = adenosine(in) + Na(+)(in). Due to its high apparent affinity but slow transport, adenosine could act as a negative regulator of pyrimidine transport under some conditions. In terms of biological role, sodium and pyrimidine nucleoside symporter of the plasma membrane that imports uridine, thymidine and cytidine into cells by coupling their transport to the transmembrane sodium electrochemical gradient. Also transports adenosine, an atypical substrate transported with high apparent affinity, but low maximum velocity. Therefore, exhibits the transport characteristics of the nucleoside transport system cit or N2 subtype (N2/cit). Involved in renal nucleoside (re)absorption. This Rattus norvegicus (Rat) protein is Sodium/nucleoside cotransporter 1.